The sequence spans 385 residues: ATP phosphoribosyltransferase regulatory subunit (385 aa).

It belongs to the class-II aminoacyl-tRNA synthetase family. HisZ subfamily. In terms of assembly, heteromultimer composed of HisG and HisZ subunits.

The protein localises to the cytoplasm. It participates in amino-acid biosynthesis; L-histidine biosynthesis; L-histidine from 5-phospho-alpha-D-ribose 1-diphosphate: step 1/9. Its function is as follows. Required for the first step of histidine biosynthesis. May allow the feedback regulation of ATP phosphoribosyltransferase activity by histidine. This Bordetella parapertussis (strain 12822 / ATCC BAA-587 / NCTC 13253) protein is ATP phosphoribosyltransferase regulatory subunit.